The chain runs to 538 residues: ATP synthase subunit beta, mitochondrial (538 aa).

215 to 222 (GGAGVGKT) contacts ATP.

The protein belongs to the ATPase alpha/beta chains family. Subunit of the F-type ATPase which has 2 components, CF(1) - the catalytic core - and CF(0) - the membrane proton channel. Interacts (via N-terminus) with lov-1 (via PLAT domain). As to expression, expressed in three categories of adult male sensory neurons: tail ray B neurons, HOB hook neuron and head cephalic (CEM) neurons.

The protein localises to the cell projection. Its subcellular location is the cilium. It is found in the mitochondrion. It localises to the mitochondrion inner membrane. It catalyses the reaction ATP + H2O + 4 H(+)(in) = ADP + phosphate + 5 H(+)(out). Functionally, mitochondrial membrane ATP synthase (F(1)F(0) ATP synthase or Complex V) produces ATP from ADP in the presence of a proton gradient across the membrane which is generated by electron transport complexes of the respiratory chain. F-type ATPases consist of two structural domains, F(1) - containing the extramembraneous catalytic core, and F(0) - containing the membrane proton channel, linked together by a central stalk and a peripheral stalk. During catalysis, ATP synthesis in the catalytic domain of F(1) is coupled via a rotary mechanism of the central stalk subunits to proton translocation. Subunits alpha and beta form the catalytic core in F(1). Rotation of the central stalk against the surrounding subunits leads to hydrolysis of ATP in three separate catalytic sites on the beta subunits. Required during male mating behavior for the response to hermaphrodite contact, acting with lov-1 and pkd-2. May be involved in polycystin signaling. In Caenorhabditis elegans, this protein is ATP synthase subunit beta, mitochondrial.